Here is a 232-residue protein sequence, read N- to C-terminus: Large ribosomal subunit protein uL1 (232 aa).

This sequence belongs to the universal ribosomal protein uL1 family. In terms of assembly, part of the 50S ribosomal subunit.

Its function is as follows. Binds directly to 23S rRNA. The L1 stalk is quite mobile in the ribosome, and is involved in E site tRNA release. Functionally, protein L1 is also a translational repressor protein, it controls the translation of the L11 operon by binding to its mRNA. The polypeptide is Large ribosomal subunit protein uL1 (Chlamydia abortus (strain DSM 27085 / S26/3) (Chlamydophila abortus)).